The following is a 406-amino-acid chain: uncharacterized protein (406 aa).

Gly-2 carries N-myristoyl glycine; by host lipidation. Residues 291–406 (QLESTTEVKP…FQYNKPTYDI (116 aa)) are disordered. Basic and acidic residues predominate over residues 296–310 (TEVKPESTTEVKPES). The segment covering 311–323 (TSEVQPESTTEFQ) has biased composition (polar residues). Low complexity-rich tracts occupy residues 324–333 (PESTTVVEPE), 341–351 (ESTTEFQPEST), and 359–369 (TTEPQVESTTE). Positions 370-406 (FQPESSTEPQVESTVEVQAESMNESSYFQYNKPTYDI) are enriched in polar residues.

This is an uncharacterized protein from Acanthamoeba polyphaga (Amoeba).